Here is a 930-residue protein sequence, read N- to C-terminus: Translation initiation factor IF-2 (930 aa).

Positions 50–67 (FKPAAAPKVEAKPAAPKV) are enriched in low complexity. 2 disordered regions span residues 50–217 (FKPA…SSEE) and 260–346 (EVVP…HELP). 2 stretches are compositionally biased toward basic and acidic residues: residues 68-90 (SAEK…EAKP) and 110-125 (FKAE…AERR). The span at 129-141 (KGNNRDQQQNGNR) shows a compositional bias: low complexity. 2 stretches are compositionally biased toward basic and acidic residues: residues 157–167 (RDNRRFNDQAK) and 262–295 (VPEK…DGPR). Low complexity predominate over residues 309–318 (NQKNSNWNNN). Positions 337–346 (VTERKFHELP) are enriched in basic and acidic residues. A tr-type G domain is found at 432–599 (ERPPVVTIMG…TVLLVAEIQE (168 aa)). A G1 region spans residues 441–448 (GHVDHGKT). A GTP-binding site is contributed by 441-448 (GHVDHGKT). Residues 466-470 (GITQH) are G2. Residues 487–490 (DTPG) form a G3 region. Residues 487-491 (DTPGH) and 541-544 (NKID) contribute to the GTP site. Residues 541–544 (NKID) form a G4 region. Residues 577–579 (SAK) form a G5 region.

The protein belongs to the TRAFAC class translation factor GTPase superfamily. Classic translation factor GTPase family. IF-2 subfamily.

Its subcellular location is the cytoplasm. Its function is as follows. One of the essential components for the initiation of protein synthesis. Protects formylmethionyl-tRNA from spontaneous hydrolysis and promotes its binding to the 30S ribosomal subunits. Also involved in the hydrolysis of GTP during the formation of the 70S ribosomal complex. The sequence is that of Translation initiation factor IF-2 from Streptococcus pneumoniae (strain CGSP14).